A 276-amino-acid polypeptide reads, in one-letter code: MLMITSFANPRVAQAFVDYMATQGVILTIQQHNQSDVWLADESQAERVRAELARFLENPADPRYLAASWLAGHTGSGLHYRRYPFFAALRERAGPVTWVMMIACVVVFIAMQILGDQEVMLWLAWPFDPTLKFEFWRYFTHALMHFSLMHILFNLLWWWYLGGAVEKRLGSGKLIVITLISALLSGYVQQKFSGPWFGGLSGVVYALMGYVWLRGERDPQSGIYLQRGLIIFALIWIVAGWFDLFGMSMANGAHIAGLAVGLAMAFVDSLNARKRK.

Transmembrane regions (helical) follow at residues 94–114 (GPVT…MQIL), 142–162 (ALMH…WYLG), 169–189 (LGSG…GYVQ), 192–212 (FSGP…GYVW), 229–249 (LIIF…GMSM), and 250–270 (ANGA…VDSL). S201 acts as the Nucleophile in catalysis. Residue H254 is part of the active site.

Belongs to the peptidase S54 family.

It is found in the cell inner membrane. The enzyme catalyses Cleaves type-1 transmembrane domains using a catalytic dyad composed of serine and histidine that are contributed by different transmembrane domains.. Rhomboid-type serine protease that catalyzes intramembrane proteolysis. This Shigella flexneri serotype 5b (strain 8401) protein is Rhomboid protease GlpG.